The sequence spans 1182 residues: Retrotransposable element SLACS 132 kDa protein (1182 aa).

Disordered regions lie at residues 77-97 (GERS…PRER), 163-220 (DVLD…STDQ), 317-339 (RRKR…ALRL), and 418-478 (RTAR…STAP). A compositionally biased stretch (acidic residues) spans 163-174 (DVLDEEEQDDDL). A compositionally biased stretch (basic and acidic residues) spans 420–446 (ARREQQQQRGKDNQEEEDRQKKEEKSL). Over residues 456–475 (SVRQGGQPSSSQPKRLNRWS) the composition is skewed to polar residues. The Reverse transcriptase domain maps to 560 to 790 (NADVSMEVGR…TGDTGFGTAV (231 aa)).

It carries out the reaction DNA(n) + a 2'-deoxyribonucleoside 5'-triphosphate = DNA(n+1) + diphosphate. The chain is Retrotransposable element SLACS 132 kDa protein from Trypanosoma brucei gambiense.